A 719-amino-acid chain; its full sequence is MVYQGNRITVTMLEDGIANMQYNAENESVNKFDTETNKQFAEVVNALEKADDIKGLIVTSSKGVFIAGADITEFVASFKQSEEEIKDWVININDAFNRFEDLPFPKVAAINGAALGGGCEMTLVCEYRVMSDKAIIGLPETQLGIFPGFGGTVRSTRVIGIDNALELIATGTPKKALDALKLGLVDATVAADDLQDAAIDLVKKCISDELDWQAKREEKLVPVKLNQLEQAMAFNSAKGMIFAKANPKQYPAPALAIAAIEKHVNLPRDKAIEVEAAGFAKAAKTPQAESLVGLFLSDQLVKKLAKQHSKKAHDINEAAVLGAGIMGGGIAYQAASKGLPIIMKDIKSEQLDLGMGEASKLLGKMVDRGKITPAKMGETLSRIRPTLNYGDFAETDIVIEAVVENPNVKRAVLKEVEGLVKDDCILASNTSTISITFLAEALERPENFVGMHFFNPVNRMPLVEVIRGEKSSEEAISTTVALATKMGKVPVVVNDCPGFLVNRVLFPYFGAFDLLLKQGADFAHVDKVMEKFGWPMGPAYLIDVVGLDTGVHGAEVMAEGFPDRMKPDYKGAIEHLYENKRLGQKNGVGFYKYEMDKRGKPKKVADEATYELLKTTTDSDKQTFEDQAIIDRTMLAFCNETVRCLEDNIVSTPSEADMAMIMGVGFPPFRGGPCRYIDQMGLDNYLALCEKYAYLGKAYEAPQKIRDMAAAGETFYATA.

An enoyl-CoA hydratase/isomerase region spans residues 1–190 (MVYQGNRITV…KLGLVDATVA (190 aa)). Position 298 (D298) interacts with substrate. Residues 313–719 (HDINEAAVLG…AAGETFYATA (407 aa)) form a 3-hydroxyacyl-CoA dehydrogenase region. NAD(+)-binding positions include M326, D345, 402–404 (VVE), K409, and S431. H452 serves as the catalytic For 3-hydroxyacyl-CoA dehydrogenase activity. Residue N455 participates in NAD(+) binding. N502 serves as a coordination point for substrate.

In the N-terminal section; belongs to the enoyl-CoA hydratase/isomerase family. This sequence in the C-terminal section; belongs to the 3-hydroxyacyl-CoA dehydrogenase family. Heterotetramer of two alpha chains (FadB) and two beta chains (FadA).

The enzyme catalyses a (3S)-3-hydroxyacyl-CoA + NAD(+) = a 3-oxoacyl-CoA + NADH + H(+). It carries out the reaction a (3S)-3-hydroxyacyl-CoA = a (2E)-enoyl-CoA + H2O. It catalyses the reaction a 4-saturated-(3S)-3-hydroxyacyl-CoA = a (3E)-enoyl-CoA + H2O. The catalysed reaction is (3S)-3-hydroxybutanoyl-CoA = (3R)-3-hydroxybutanoyl-CoA. The enzyme catalyses a (3Z)-enoyl-CoA = a 4-saturated (2E)-enoyl-CoA. It carries out the reaction a (3E)-enoyl-CoA = a 4-saturated (2E)-enoyl-CoA. Its pathway is lipid metabolism; fatty acid beta-oxidation. Its function is as follows. Involved in the aerobic and anaerobic degradation of long-chain fatty acids via beta-oxidation cycle. Catalyzes the formation of 3-oxoacyl-CoA from enoyl-CoA via L-3-hydroxyacyl-CoA. It can also use D-3-hydroxyacyl-CoA and cis-3-enoyl-CoA as substrate. This is Fatty acid oxidation complex subunit alpha from Psychrobacter cryohalolentis (strain ATCC BAA-1226 / DSM 17306 / VKM B-2378 / K5).